A 512-amino-acid chain; its full sequence is NAD(P)H-quinone oxidoreductase subunit 2 B, chloroplastic (512 aa).

Helical transmembrane passes span 31–51 (FIFP…IDLT), 57–77 (IPWL…ALLF), 99–119 (IFQF…VEYI), 124–144 (MAIT…MFLC), 149–169 (LITI…LSGY), 183–203 (YLLM…WLYG), 229–249 (ISIA…LAPF), 261–281 (PTPV…ALAT), 295–315 (WHLL…LIAI), 323–343 (MLAY…IVGD), 354–374 (YMLF…LFGL), 395–415 (ALSL…AGFF), 418–438 (LYLF…IGLL), and 484–504 (MIVC…IIAI).

This sequence belongs to the complex I subunit 2 family. In terms of assembly, NDH is composed of at least 16 different subunits, 5 of which are encoded in the nucleus.

The protein resides in the plastid. It localises to the chloroplast thylakoid membrane. It catalyses the reaction a plastoquinone + NADH + (n+1) H(+)(in) = a plastoquinol + NAD(+) + n H(+)(out). The enzyme catalyses a plastoquinone + NADPH + (n+1) H(+)(in) = a plastoquinol + NADP(+) + n H(+)(out). NDH shuttles electrons from NAD(P)H:plastoquinone, via FMN and iron-sulfur (Fe-S) centers, to quinones in the photosynthetic chain and possibly in a chloroplast respiratory chain. The immediate electron acceptor for the enzyme in this species is believed to be plastoquinone. Couples the redox reaction to proton translocation, and thus conserves the redox energy in a proton gradient. The chain is NAD(P)H-quinone oxidoreductase subunit 2 B, chloroplastic from Arabidopsis thaliana (Mouse-ear cress).